Here is a 363-residue protein sequence, read N- to C-terminus: Isopentenyl-diphosphate delta-isomerase (363 aa).

15 to 16 contacts substrate; it reads RK. Residues serine 73, 74–76, serine 104, and asparagine 133 contribute to the FMN site; that span reads SMT. 104-106 is a binding site for substrate; that stretch reads SMR. Glutamine 168 contacts substrate. Glutamate 169 provides a ligand contact to Mg(2+). FMN contacts are provided by residues lysine 200, threonine 230, and 313–314; that span reads AG.

The protein belongs to the IPP isomerase type 2 family. In terms of assembly, homooctamer. Dimer of tetramers. FMN serves as cofactor. It depends on NADPH as a cofactor. Requires Mg(2+) as cofactor.

It is found in the cytoplasm. It catalyses the reaction isopentenyl diphosphate = dimethylallyl diphosphate. In terms of biological role, involved in the biosynthesis of isoprenoids. Catalyzes the 1,3-allylic rearrangement of the homoallylic substrate isopentenyl (IPP) to its allylic isomer, dimethylallyl diphosphate (DMAPP). The protein is Isopentenyl-diphosphate delta-isomerase of Chlorobium phaeobacteroides (strain DSM 266 / SMG 266 / 2430).